The following is a 360-amino-acid chain: MPTPLSLQTLAKKLLATQYISKDYYFILKYCGLWWHGAPIMLSTNEDNQLMIKSASFKEGLSLDLALMKVVQENNHDLIKLFTEWGADINSSLVTVNMECTRNLCRELGAKEALNERDILQIFYKTRDIKTSSHVILCHELLSNNPLFQNIERMRSIIYRSLEKLSINFILDDISFSEMLTRHWYGLAILYNLTEAIQYFYEKYKHFKNWRLICGLSFNNLSDLYEIYNLEKVDMDIDEMMYLACSMYGGNYSTIYYCFVLGADINQAMLTSVINHHIDNLFFCIDLGADAFEESMELAKQKNHNILVHILSFKNYSPDFSLLSLKMTDPEKINALLDEEKYESKNMLMYDEFDACTNNL.

It belongs to the asfivirus MGF 360 family.

Functionally, plays a role in virus cell tropism, and may be required for efficient virus replication in macrophages. The chain is Protein MGF 360-2L from Ornithodoros (relapsing fever ticks).